Here is a 351-residue protein sequence, read N- to C-terminus: Selenide, water dikinase (351 aa).

The active site involves Sec-15. Sec-15 is a non-standard amino acid (selenocysteine). ATP-binding positions include Lys-18 and 47-49; that span reads DNE. Asp-50 contributes to the Mg(2+) binding site. Residues Asp-67, Asp-90, and 138-140 each bind ATP; that span reads GHS. Asp-90 lines the Mg(2+) pocket. Asp-227 lines the Mg(2+) pocket.

Belongs to the selenophosphate synthase 1 family. Class I subfamily. Homodimer. Requires Mg(2+) as cofactor.

It catalyses the reaction hydrogenselenide + ATP + H2O = selenophosphate + AMP + phosphate + 2 H(+). Synthesizes selenophosphate from selenide and ATP. The polypeptide is Selenide, water dikinase (Nitratidesulfovibrio vulgaris (strain DP4) (Desulfovibrio vulgaris)).